We begin with the raw amino-acid sequence, 940 residues long: Inter-alpha-trypsin inhibitor heavy chain H5 (940 aa).

The N-terminal stretch at 1–16 (MLLLLGLCLGLSQCVG) is a signal peptide. Positions 35–161 (VPRQVRLLQR…KAAFFLSYEE (127 aa)) constitute a VIT domain. N97 and N127 each carry an N-linked (GlcNAc...) asparagine glycan. Disordered regions lie at residues 117-136 (KSGD…NGEK) and 208-227 (SRQR…PSTV). Residue N231 is glycosylated (N-linked (GlcNAc...) asparagine). One can recognise a VWFA domain in the interval 295 to 478 (NVVFVLDSSA…SQLIGFYDEI (184 aa)). A disordered region spans residues 405-432 (DGWEAHGRGDAHPQDPQQHPRGRPRPSL). Residues 407 to 417 (WEAHGRGDAHP) are compositionally biased toward basic and acidic residues. An N-linked (GlcNAc...) asparagine glycan is attached at N508. The segment at 541 to 571 (PKTDVPVGPQKAGKDVTGSPRPGGDGERNPN) is disordered. 3 N-linked (GlcNAc...) asparagine glycosylation sites follow: N774, N793, and N860.

The protein belongs to the ITIH family.

Its subcellular location is the secreted. Functionally, may act as a tumor suppressor. The sequence is that of Inter-alpha-trypsin inhibitor heavy chain H5 (ITIH5) from Pongo abelii (Sumatran orangutan).